Here is a 269-residue protein sequence, read N- to C-terminus: Formamidopyrimidine-DNA glycosylase (269 aa).

Pro-2 acts as the Schiff-base intermediate with DNA in catalysis. Glu-3 (proton donor) is an active-site residue. Lys-57 serves as the catalytic Proton donor; for beta-elimination activity. Positions 90, 109, and 150 each coordinate DNA. The FPG-type zinc-finger motif lies at 235 to 269; the sequence is QVYGKAGESCPECGEAIQELKIGQRNTFYCSYCQC. The Proton donor; for delta-elimination activity role is filled by Arg-259.

It belongs to the FPG family. Monomer. Zn(2+) is required as a cofactor.

The enzyme catalyses Hydrolysis of DNA containing ring-opened 7-methylguanine residues, releasing 2,6-diamino-4-hydroxy-5-(N-methyl)formamidopyrimidine.. The catalysed reaction is 2'-deoxyribonucleotide-(2'-deoxyribose 5'-phosphate)-2'-deoxyribonucleotide-DNA = a 3'-end 2'-deoxyribonucleotide-(2,3-dehydro-2,3-deoxyribose 5'-phosphate)-DNA + a 5'-end 5'-phospho-2'-deoxyribonucleoside-DNA + H(+). In terms of biological role, involved in base excision repair of DNA damaged by oxidation or by mutagenic agents. Acts as a DNA glycosylase that recognizes and removes damaged bases. Has a preference for oxidized purines, such as 7,8-dihydro-8-oxoguanine (8-oxoG). Has AP (apurinic/apyrimidinic) lyase activity and introduces nicks in the DNA strand. Cleaves the DNA backbone by beta-delta elimination to generate a single-strand break at the site of the removed base with both 3'- and 5'-phosphates. The polypeptide is Formamidopyrimidine-DNA glycosylase (Vibrio vulnificus (strain YJ016)).